The following is a 124-amino-acid chain: Small ribosomal subunit protein uS12 (124 aa).

The disordered stretch occupies residues 1–29 (MPTINQLVRRPRRPRESANKAPALQHNPQ). Asp90 carries the 3-methylthioaspartic acid modification.

The protein belongs to the universal ribosomal protein uS12 family. Part of the 30S ribosomal subunit. Contacts proteins S8 and S17. May interact with IF1 in the 30S initiation complex.

With S4 and S5 plays an important role in translational accuracy. Its function is as follows. Interacts with and stabilizes bases of the 16S rRNA that are involved in tRNA selection in the A site and with the mRNA backbone. Located at the interface of the 30S and 50S subunits, it traverses the body of the 30S subunit contacting proteins on the other side and probably holding the rRNA structure together. The combined cluster of proteins S8, S12 and S17 appears to hold together the shoulder and platform of the 30S subunit. The sequence is that of Small ribosomal subunit protein uS12 from Anaplasma marginale (strain Florida).